Reading from the N-terminus, the 81-residue chain is Cytochrome b559 subunit alpha (81 aa).

The helical transmembrane segment at 21–35 threads the bilayer; sequence VIHSVTIPSLFVGGW. Position 23 (H23) interacts with heme.

This sequence belongs to the PsbE/PsbF family. In terms of assembly, heterodimer of an alpha subunit and a beta subunit. PSII is composed of 1 copy each of membrane proteins PsbA, PsbB, PsbC, PsbD, PsbE, PsbF, PsbH, PsbI, PsbJ, PsbK, PsbL, PsbM, PsbT, PsbY, PsbZ, Psb30/Ycf12, at least 3 peripheral proteins of the oxygen-evolving complex and a large number of cofactors. It forms dimeric complexes. It depends on heme b as a cofactor.

The protein localises to the plastid. It is found in the chloroplast thylakoid membrane. Its function is as follows. This b-type cytochrome is tightly associated with the reaction center of photosystem II (PSII). PSII is a light-driven water:plastoquinone oxidoreductase that uses light energy to abstract electrons from H(2)O, generating O(2) and a proton gradient subsequently used for ATP formation. It consists of a core antenna complex that captures photons, and an electron transfer chain that converts photonic excitation into a charge separation. In Euglena gracilis, this protein is Cytochrome b559 subunit alpha.